The chain runs to 248 residues: MGRKPCCSKEGMNRGAWASMEDKILVTYIKTHGEGKWRSLPKRAGLKRCGKSCRLRWLNYLRPGIKRGNISEDEEDLIIRLHNLLGNRWSLIAGRLPGRTDNEIKNYWNTNLGRRVHDQSHQHCRPNPTITSTKPADAPPANANTVATMPVRTKAARCTRAFFSDDLSDQKEVAANNDGLDNKKEEFDAVGSIGPLLQENVGNAVGEDTNIDMAVSLDSLLLFDSFQVDDGINLQSMAALLDSEDQWF.

HTH myb-type domains follow at residues 9–61 (KEGM…LNYL) and 62–116 (RPGI…GRRV). 2 consecutive DNA-binding regions (H-T-H motif) follow at residues 37 to 61 (WRSL…LNYL) and 89 to 112 (WSLI…NTNL). Positions 118 to 144 (DQSHQHCRPNPTITSTKPADAPPANAN) are disordered.

The protein resides in the nucleus. Functionally, transcription activator involved in the spatiotemporal regulation of flavonoid biosynthesis specifically in the corms of Montbretia. Activates the promoters of enzymes involved in the biosynthesis of the flavonol kaempferol and the flavonol-glycoside kaempferol-rhamnoside. The sequence is that of Transcription factor MYB1 from Crocosmia x crocosmiiflora (Montbretia).